We begin with the raw amino-acid sequence, 133 residues long: Holo-[acyl-carrier-protein] synthase (133 aa).

Residues aspartate 8 and glutamate 57 each coordinate Mg(2+).

The protein belongs to the P-Pant transferase superfamily. AcpS family. It depends on Mg(2+) as a cofactor.

Its subcellular location is the cytoplasm. The catalysed reaction is apo-[ACP] + CoA = holo-[ACP] + adenosine 3',5'-bisphosphate + H(+). Its function is as follows. Transfers the 4'-phosphopantetheine moiety from coenzyme A to a Ser of acyl-carrier-protein. In Bartonella bacilliformis (strain ATCC 35685 / KC583 / Herrer 020/F12,63), this protein is Holo-[acyl-carrier-protein] synthase.